A 754-amino-acid chain; its full sequence is Phosphatidylinositol 4-phosphate 5-kinase 7 (754 aa).

MORN repeat units follow at residues 16 to 38, 39 to 61, 62 to 84, 85 to 107, 108 to 130, 131 to 153, 154 to 176, and 177 to 198; these read YSGEVKGIIPNGKGKYAWSDGTI, YEGDWDEGKISGKGKLIWSSGAK, YEGDFSGGYLHGFGTMTSPDESV, YSGAWRMNVRHGLGRKEYCNSDL, YDGLWKEGLQDGRGSYSWTNGNR, YIGNWKKGKMCERGVMRWENGDL, YDGFWLNGFRHGSGVYKFADGCL, and YYGTWSRGLKDGKGVFYPAGTK. The PIPK domain occupies 329–750; the sequence is GEHNYYLMLN…RFVNFLHKVF (422 aa). Residues 710–731 are activation loop; sequence YNTKKKVEHTCKSLQYDPMTIS.

The enzyme catalyses a 1,2-diacyl-sn-glycero-3-phospho-(1D-myo-inositol 4-phosphate) + ATP = a 1,2-diacyl-sn-glycero-3-phospho-(1D-myo-inositol-4,5-bisphosphate) + ADP + H(+). The polypeptide is Phosphatidylinositol 4-phosphate 5-kinase 7 (PIP5K7) (Arabidopsis thaliana (Mouse-ear cress)).